The primary structure comprises 218 residues: 25 kDa calcium-binding protein (218 aa).

4 EF-hand domains span residues 24–59 (GAKT…AYKS), 66–101 (PSSD…YLTG), 128–163 (AKLD…TYAE), and 171–206 (PTKE…SLQK). 17 residues coordinate Ca(2+): Asp-37, Arg-43, Asp-48, Asp-79, Asn-81, Asp-83, Asp-90, Asp-141, Asp-143, Ser-145, Gln-147, Glu-152, Asp-184, Asn-186, Asp-188, Ser-190, and Glu-195.

In terms of biological role, expected to play a crucial role in calcium-dependent regulation of ciliary movement. The protein is 25 kDa calcium-binding protein of Tetrahymena thermophila.